The following is a 147-amino-acid chain: Large ribosomal subunit protein uL13 (147 aa).

The protein belongs to the universal ribosomal protein uL13 family. As to quaternary structure, part of the 50S ribosomal subunit.

Functionally, this protein is one of the early assembly proteins of the 50S ribosomal subunit, although it is not seen to bind rRNA by itself. It is important during the early stages of 50S assembly. This is Large ribosomal subunit protein uL13 from Nocardioides sp. (strain ATCC BAA-499 / JS614).